Reading from the N-terminus, the 306-residue chain is MSIRIVPKEQLGKEPSEKSISFIPPVLFPNLKNLYQRRAERFQALAKDNPFADYLEFAAEIALAQEKALHDNPLELDLTPLLSQQTGIAPLDKKTFKRSKHWHALLASIIAELQSVVPESAKIALENLSKASETELEEMATALLNDEYSKVSADKSVFIWAALSLYWAQLAANIPGKAKTEYGENRQFCPVCNSMPVSSMVQIGTTQGLRYLHCNLCETEWHVVRIKCTNCELTGKLNYWSLDSENAPVKAESCGDCGSYLKILYQEKDANVDAVADDLASLILDAKMEEEGFARSSINPLLFPNE.

The protein belongs to the FdhE family.

The protein localises to the cytoplasm. Functionally, necessary for formate dehydrogenase activity. In Proteus mirabilis (strain HI4320), this protein is Protein FdhE homolog.